The primary structure comprises 264 residues: Thymidylate synthase (264 aa).

Residue R21 participates in dUMP binding. H51 lines the (6R)-5,10-methylene-5,6,7,8-tetrahydrofolate pocket. Position 126-127 (126-127) interacts with dUMP; the sequence is RR. C146 acts as the Nucleophile in catalysis. Residues 166–169, N177, and 207–209 each bind dUMP; these read RSCD and HLY. D169 is a (6R)-5,10-methylene-5,6,7,8-tetrahydrofolate binding site. A263 contacts (6R)-5,10-methylene-5,6,7,8-tetrahydrofolate.

It belongs to the thymidylate synthase family. Bacterial-type ThyA subfamily. In terms of assembly, homodimer.

The protein resides in the cytoplasm. It carries out the reaction dUMP + (6R)-5,10-methylene-5,6,7,8-tetrahydrofolate = 7,8-dihydrofolate + dTMP. It functions in the pathway pyrimidine metabolism; dTTP biosynthesis. In terms of biological role, catalyzes the reductive methylation of 2'-deoxyuridine-5'-monophosphate (dUMP) to 2'-deoxythymidine-5'-monophosphate (dTMP) while utilizing 5,10-methylenetetrahydrofolate (mTHF) as the methyl donor and reductant in the reaction, yielding dihydrofolate (DHF) as a by-product. This enzymatic reaction provides an intracellular de novo source of dTMP, an essential precursor for DNA biosynthesis. This Aeromonas hydrophila subsp. hydrophila (strain ATCC 7966 / DSM 30187 / BCRC 13018 / CCUG 14551 / JCM 1027 / KCTC 2358 / NCIMB 9240 / NCTC 8049) protein is Thymidylate synthase.